The following is a 483-amino-acid chain: 1-aminocyclopropane-1-carboxylate synthase 2 (483 aa).

An N6-(pyridoxal phosphate)lysine modification is found at Lys-275.

Belongs to the class-I pyridoxal-phosphate-dependent aminotransferase family. The cofactor is pyridoxal 5'-phosphate.

It carries out the reaction S-adenosyl-L-methionine = 1-aminocyclopropane-1-carboxylate + S-methyl-5'-thioadenosine + H(+). The protein operates within alkene biosynthesis; ethylene biosynthesis via S-adenosyl-L-methionine; ethylene from S-adenosyl-L-methionine: step 1/2. Its function is as follows. Catalyzes the formation of 1-aminocyclopropane-1-carboxylate, a direct precursor of ethylene in higher plants. Involved in defense response by producing ethylene after pathogen infection. Involved in several phosphate deficiency-induced adaptive responses, such as lateral root elongation. The protein is 1-aminocyclopropane-1-carboxylate synthase 2 of Oryza sativa subsp. japonica (Rice).